Here is a 323-residue protein sequence, read N- to C-terminus: Chitinase 1 (323 aa).

The signal sequence occupies residues 1 to 20 (MRALAVVVVATAFAVVAVRG). One can recognise a Chitin-binding type-1 domain in the interval 21–61 (EQCGSQAGGALCPNCLCCSQYGWCGSTSAYCGSGCQSQCSG). Intrachain disulfides connect Cys23–Cys38, Cys32–Cys44, Cys35–Cys63, Cys37–Cys51, Cys55–Cys59, Cys100–Cys162, Cys176–Cys184, and Cys283–Cys315. Catalysis depends on Glu144, which acts as the Proton donor.

The protein belongs to the glycosyl hydrolase 19 family. Chitinase class I subfamily. In terms of tissue distribution, expressed in roots, leaves, sheaths and meristems.

It catalyses the reaction Random endo-hydrolysis of N-acetyl-beta-D-glucosaminide (1-&gt;4)-beta-linkages in chitin and chitodextrins.. Its function is as follows. Hydrolyzes chitin and may play a role in defense against fungal pathogens containing chitin. The sequence is that of Chitinase 1 (Cht1) from Oryza sativa subsp. japonica (Rice).